Reading from the N-terminus, the 430-residue chain is Adenylosuccinate synthetase (430 aa).

Residues 11–17 and 39–41 contribute to the GTP site; these read GDEGKGK and GHS. Asp12 serves as the catalytic Proton acceptor. The Mg(2+) site is built by Asp12 and Gly39. IMP-binding positions include 12-15, 37-40, Thr129, Arg143, Asn221, Thr236, and Arg300; these read DEGK and NAGH. His40 functions as the Proton donor in the catalytic mechanism. A substrate-binding site is contributed by 296–302; that stretch reads VSTGRKR. GTP is bound by residues Arg302, 328–330, and 412–414; these read KLD and GTG.

Belongs to the adenylosuccinate synthetase family. As to quaternary structure, homodimer. Requires Mg(2+) as cofactor.

Its subcellular location is the cytoplasm. The enzyme catalyses IMP + L-aspartate + GTP = N(6)-(1,2-dicarboxyethyl)-AMP + GDP + phosphate + 2 H(+). It participates in purine metabolism; AMP biosynthesis via de novo pathway; AMP from IMP: step 1/2. Plays an important role in the de novo pathway and in the salvage pathway of purine nucleotide biosynthesis. Catalyzes the first committed step in the biosynthesis of AMP from IMP. The protein is Adenylosuccinate synthetase of Sordaria macrospora (strain ATCC MYA-333 / DSM 997 / K(L3346) / K-hell).